A 759-amino-acid polypeptide reads, in one-letter code: Phosphoribosylformylglycinamidine synthase subunit PurL (759 aa).

H46 is an active-site residue. ATP-binding residues include Y49 and K88. Residue E90 participates in Mg(2+) binding. Substrate is bound by residues 91 to 94 and R113; that span reads SHNH. Catalysis depends on H92, which acts as the Proton acceptor. D114 contacts Mg(2+). Q237 provides a ligand contact to substrate. D265 contacts Mg(2+). 309–311 lines the substrate pocket; the sequence is ESQ. 2 residues coordinate ATP: D498 and G535. N536 provides a ligand contact to Mg(2+). S538 provides a ligand contact to substrate.

It belongs to the FGAMS family. Monomer. Part of the FGAM synthase complex composed of 1 PurL, 1 PurQ and 2 PurS subunits.

It is found in the cytoplasm. It catalyses the reaction N(2)-formyl-N(1)-(5-phospho-beta-D-ribosyl)glycinamide + L-glutamine + ATP + H2O = 2-formamido-N(1)-(5-O-phospho-beta-D-ribosyl)acetamidine + L-glutamate + ADP + phosphate + H(+). The protein operates within purine metabolism; IMP biosynthesis via de novo pathway; 5-amino-1-(5-phospho-D-ribosyl)imidazole from N(2)-formyl-N(1)-(5-phospho-D-ribosyl)glycinamide: step 1/2. In terms of biological role, part of the phosphoribosylformylglycinamidine synthase complex involved in the purines biosynthetic pathway. Catalyzes the ATP-dependent conversion of formylglycinamide ribonucleotide (FGAR) and glutamine to yield formylglycinamidine ribonucleotide (FGAM) and glutamate. The FGAM synthase complex is composed of three subunits. PurQ produces an ammonia molecule by converting glutamine to glutamate. PurL transfers the ammonia molecule to FGAR to form FGAM in an ATP-dependent manner. PurS interacts with PurQ and PurL and is thought to assist in the transfer of the ammonia molecule from PurQ to PurL. This Anaeromyxobacter dehalogenans (strain 2CP-C) protein is Phosphoribosylformylglycinamidine synthase subunit PurL.